A 248-amino-acid polypeptide reads, in one-letter code: PACRG-like protein (248 aa).

Position 1 is an N-acetylmethionine (Met1). The segment covering 1–29 has biased composition (polar residues); it reads MQKSEGSGGTQLKNRATGNYDQRTSSSTQ. The tract at residues 1-71 is disordered; that stretch reads MQKSEGSGGT…LNPKTINPFG (71 aa). The segment covering 39-49 has biased composition (low complexity); that stretch reads SKSSLSTSSPE. Ser47 carries the phosphoserine modification.

The chain is PACRG-like protein (PACRGL) from Homo sapiens (Human).